We begin with the raw amino-acid sequence, 570 residues long: GTPase Obg (570 aa).

One can recognise an Obg domain in the interval 2 to 168; sequence SDFVDRVTVH…RDIILELKSI (167 aa). The tract at residues 15 to 43 is disordered; that stretch reads GDGGNGSAGIRREKYKPLAGPNGGNGGKG. Residues 169–349 form the OBG-type G domain; it reads ADVALVGFPS…LNFALAKLVK (181 aa). Residues 175–182, 200–204, 221–224, 301–304, and 330–332 each bind GTP; these read GFPSAGKS, FTTLV, DVPG, NKID, and STA. Mg(2+) contacts are provided by Ser182 and Thr202. One can recognise an OCT domain in the interval 382 to 468; it reads GRNAQVREFE…ERAVAFDWDP (87 aa). Residues 521–570 form a disordered region; sequence RAAMQAERAAGHWADPSIDDDRHDEQSLFGRGEVEEYEDEPGADGSRQLD.

The protein belongs to the TRAFAC class OBG-HflX-like GTPase superfamily. OBG GTPase family. In terms of assembly, monomer. Requires Mg(2+) as cofactor.

The protein resides in the cytoplasm. An essential GTPase which binds GTP, GDP and possibly (p)ppGpp with moderate affinity, with high nucleotide exchange rates and a fairly low GTP hydrolysis rate. Plays a role in control of the cell cycle, stress response, ribosome biogenesis and in those bacteria that undergo differentiation, in morphogenesis control. The polypeptide is GTPase Obg (Bifidobacterium animalis subsp. lactis (strain AD011)).